The following is a 349-amino-acid chain: Phosphoribosylformylglycinamidine cyclo-ligase (349 aa).

Belongs to the AIR synthase family.

It is found in the cytoplasm. The enzyme catalyses 2-formamido-N(1)-(5-O-phospho-beta-D-ribosyl)acetamidine + ATP = 5-amino-1-(5-phospho-beta-D-ribosyl)imidazole + ADP + phosphate + H(+). It functions in the pathway purine metabolism; IMP biosynthesis via de novo pathway; 5-amino-1-(5-phospho-D-ribosyl)imidazole from N(2)-formyl-N(1)-(5-phospho-D-ribosyl)glycinamide: step 2/2. The polypeptide is Phosphoribosylformylglycinamidine cyclo-ligase (Methanococcus vannielii (strain ATCC 35089 / DSM 1224 / JCM 13029 / OCM 148 / SB)).